Consider the following 317-residue polypeptide: Melanocyte-stimulating hormone receptor (317 aa).

Topologically, residues 1-37 (MPAQGSQRSLLGSLNSTLMATSSLGLSANQSGPQCLE) are extracellular. N-linked (GlcNAc...) asparagine glycans are attached at residues Asn15 and Asn29. A helical membrane pass occupies residues 38–63 (VSVPDGLFLCLGLVSLVENMLVVAAI). Residues 64–72 (AKNRNLHSP) lie on the Cytoplasmic side of the membrane. A helical transmembrane segment spans residues 73 to 93 (MYCFICCLALSDLLVSVSNVL). At 94–118 (ETAVMLLLEAGALAAQATVVQQLDN) the chain is on the extracellular side. The chain crosses the membrane as a helical span at residues 119–140 (IIDVLVCSSMVSSLCFLGAIAM). Topologically, residues 141–163 (DRYISIFYALRYHSIVTLSRAQW) are cytoplasmic. The chain crosses the membrane as a helical span at residues 164–183 (ATAAVWAAGILSSTLFIAYY). The Extracellular segment spans residues 184–191 (DHTAVLLC). The helical transmembrane segment at 192–211 (LVVFFLAMLVLMAVLYAHML) threads the bilayer. Topologically, residues 212–240 (TQACQHVQGITRLHKRQHLVQQGFGLKGA) are cytoplasmic. The helical transmembrane segment at 241–266 (ATLTILLGVFLLCWGPFFLHLTLIAV) threads the bilayer. The Extracellular portion of the chain corresponds to 267-279 (CPQHPTCSCVFKN). Residues 280 to 300 (FKLFLALIICNAIVDPLIYAF) form a helical membrane-spanning segment. Residues 301–317 (RXQELRKTLKEVLLFSW) are Cytoplasmic-facing.

The protein belongs to the G-protein coupled receptor 1 family. In terms of assembly, interacts with MGRN1, but does not undergo MGRN1-mediated ubiquitination; this interaction competes with GNAS-binding and thus inhibits agonist-induced cAMP production. Interacts with OPN3; the interaction results in a decrease in MC1R-mediated cAMP signaling and ultimately a decrease in melanin production in melanocytes.

It localises to the cell membrane. In terms of biological role, receptor for MSH (alpha, beta and gamma) and ACTH. The activity of this receptor is mediated by G proteins which activate adenylate cyclase. Mediates melanogenesis, the production of eumelanin (black/brown) and phaeomelanin (red/yellow), via regulation of cAMP signaling in melanocytes. This chain is Melanocyte-stimulating hormone receptor (MC1R), found in Loris tardigradus (Slender loris).